A 399-amino-acid chain; its full sequence is Probable aspartate/prephenate aminotransferase (399 aa).

Residues Gly39, Trp125, and Asn175 each coordinate L-aspartate. Lys239 is modified (N6-(pyridoxal phosphate)lysine). Arg375 is a binding site for L-aspartate.

Belongs to the class-I pyridoxal-phosphate-dependent aminotransferase family. In terms of assembly, homodimer. The cofactor is pyridoxal 5'-phosphate.

It localises to the cytoplasm. The catalysed reaction is L-aspartate + 2-oxoglutarate = oxaloacetate + L-glutamate. It carries out the reaction L-arogenate + 2-oxoglutarate = prephenate + L-glutamate. Functionally, catalyzes the reversible conversion of aspartate and 2-oxoglutarate to glutamate and oxaloacetate. Can also transaminate prephenate in the presence of glutamate. The sequence is that of Probable aspartate/prephenate aminotransferase (aatA) from Rickettsia typhi (strain ATCC VR-144 / Wilmington).